A 92-amino-acid polypeptide reads, in one-letter code: Small ribosomal subunit protein uS19 (92 aa).

The protein belongs to the universal ribosomal protein uS19 family.

Its function is as follows. Protein S19 forms a complex with S13 that binds strongly to the 16S ribosomal RNA. This is Small ribosomal subunit protein uS19 from Aliivibrio fischeri (strain ATCC 700601 / ES114) (Vibrio fischeri).